The sequence spans 943 residues: Isoleucine--tRNA ligase (943 aa).

A 'HIGH' region motif is present at residues 58–68 (PYANGSIHIGH). Glutamate 567 provides a ligand contact to L-isoleucyl-5'-AMP. The 'KMSKS' region signature appears at 608–612 (KMSKS). Lysine 611 lines the ATP pocket. 4 residues coordinate Zn(2+): cysteine 906, cysteine 909, cysteine 926, and cysteine 929.

The protein belongs to the class-I aminoacyl-tRNA synthetase family. IleS type 1 subfamily. Monomer. Zn(2+) is required as a cofactor.

Its subcellular location is the cytoplasm. It catalyses the reaction tRNA(Ile) + L-isoleucine + ATP = L-isoleucyl-tRNA(Ile) + AMP + diphosphate. Functionally, catalyzes the attachment of isoleucine to tRNA(Ile). As IleRS can inadvertently accommodate and process structurally similar amino acids such as valine, to avoid such errors it has two additional distinct tRNA(Ile)-dependent editing activities. One activity is designated as 'pretransfer' editing and involves the hydrolysis of activated Val-AMP. The other activity is designated 'posttransfer' editing and involves deacylation of mischarged Val-tRNA(Ile). This is Isoleucine--tRNA ligase from Ectopseudomonas mendocina (strain ymp) (Pseudomonas mendocina).